The primary structure comprises 195 residues: Protein aq_1444 (195 aa).

Residues 1–191 enclose the AMMECR1 domain; sequence MDIRELVHLG…EKEPFGEVER (191 aa).

In Aquifex aeolicus (strain VF5), this protein is Protein aq_1444.